The following is an 82-amino-acid chain: Cytotoxin 10 (82 aa).

The signal sequence occupies residues 1–22; it reads MKTLLLTLVVVVTIVCLDLGYT. Intrachain disulfides connect Cys-25–Cys-43, Cys-36–Cys-60, Cys-64–Cys-75, and Cys-76–Cys-81.

This sequence belongs to the three-finger toxin family. Short-chain subfamily. Type IA cytotoxin sub-subfamily. As to quaternary structure, monomer in solution; Homodimer and oligomer in the presence of negatively charged lipids forming a pore with a size ranging between 20 and 30 Angstroms. As to expression, expressed by the venom gland.

The protein localises to the secreted. The protein resides in the target cell membrane. In terms of biological role, shows cytolytic activity on many different cells by forming pore in lipid membranes. In vivo, increases heart rate or kills the animal by cardiac arrest. In addition, it binds to heparin with high affinity, interacts with Kv channel-interacting protein 1 (KCNIP1) in a calcium-independent manner, and binds to integrin alpha-V/beta-3 (ITGAV/ITGB3) with moderate affinity. The chain is Cytotoxin 10 from Naja atra (Chinese cobra).